The primary structure comprises 150 residues: uncharacterized protein (150 aa).

This is an uncharacterized protein from Rickettsia prowazekii (strain Madrid E).